The following is a 497-amino-acid chain: Glycerol kinase (497 aa).

ADP is bound at residue Thr-12. Thr-12, Thr-13, and Ser-14 together coordinate ATP. Thr-12 is a binding site for sn-glycerol 3-phosphate. An ADP-binding site is contributed by Arg-16. Sn-glycerol 3-phosphate contacts are provided by Arg-82, Glu-83, Tyr-134, and Asp-243. Arg-82, Glu-83, Tyr-134, Asp-243, and Gln-244 together coordinate glycerol. ADP-binding residues include Thr-265 and Gly-308. Residues Thr-265, Gly-308, Gln-312, and Gly-409 each contribute to the ATP site. 2 residues coordinate ADP: Gly-409 and Asn-413.

Belongs to the FGGY kinase family.

It carries out the reaction glycerol + ATP = sn-glycerol 3-phosphate + ADP + H(+). It participates in polyol metabolism; glycerol degradation via glycerol kinase pathway; sn-glycerol 3-phosphate from glycerol: step 1/1. With respect to regulation, inhibited by fructose 1,6-bisphosphate (FBP). Key enzyme in the regulation of glycerol uptake and metabolism. Catalyzes the phosphorylation of glycerol to yield sn-glycerol 3-phosphate. The sequence is that of Glycerol kinase from Nitratidesulfovibrio vulgaris (strain DSM 19637 / Miyazaki F) (Desulfovibrio vulgaris).